The primary structure comprises 464 residues: tRNA modification GTPase MnmE (464 aa).

Residues R29, E91, and R131 each coordinate (6S)-5-formyl-5,6,7,8-tetrahydrofolate. Positions 226–387 (GLKVALAGKP…LINYLLKKCG (162 aa)) constitute a TrmE-type G domain. Residue N236 participates in K(+) binding. Residues 236-241 (NVGKSS), 255-261 (TDLPGTT), and 280-283 (DTAG) contribute to the GTP site. A Mg(2+)-binding site is contributed by S240. Positions 255, 257, and 260 each coordinate K(+). T261 contacts Mg(2+). Residue K464 coordinates (6S)-5-formyl-5,6,7,8-tetrahydrofolate.

It belongs to the TRAFAC class TrmE-Era-EngA-EngB-Septin-like GTPase superfamily. TrmE GTPase family. In terms of assembly, homodimer. Heterotetramer of two MnmE and two MnmG subunits. K(+) serves as cofactor.

The protein localises to the cytoplasm. In terms of biological role, exhibits a very high intrinsic GTPase hydrolysis rate. Involved in the addition of a carboxymethylaminomethyl (cmnm) group at the wobble position (U34) of certain tRNAs, forming tRNA-cmnm(5)s(2)U34. This is tRNA modification GTPase MnmE from Prochlorococcus marinus (strain NATL1A).